Here is a 638-residue protein sequence, read N- to C-terminus: Probable lysine-specific demethylase 4F (638 aa).

One can recognise a JmjN domain in the interval 15 to 57; it reads IMTFYPTMEEFADFNTYVAYMESQGAHRAGLAKVIPPKEWKAR. Tyr-133 serves as a coordination point for 2-oxoglutarate. A JmjC domain is found at 143-309; sequence EESTKQWNLG…YGKVASQCSC (167 aa). Residues His-189 and Glu-191 each coordinate Fe cation. The 2-oxoglutarate site is built by Asn-199 and Lys-207. Positions 235 and 241 each coordinate Zn(2+). 2-oxoglutarate is bound at residue Lys-242. His-277 provides a ligand contact to Fe cation. Zn(2+) contacts are provided by Cys-307 and Cys-309. A disordered region spans residues 426–474; the sequence is PCRGCGRGRGRGRGRGRRPRELGTEETTVQSAAKRRLSVGTGSRAPGRK. Basic residues predominate over residues 431–443; it reads GRGRGRGRGRGRR.

The protein belongs to the JHDM3 histone demethylase family. It depends on Fe(2+) as a cofactor.

It localises to the nucleus. The catalysed reaction is N(6),N(6),N(6)-trimethyl-L-lysyl(9)-[histone H3] + 2 2-oxoglutarate + 2 O2 = N(6)-methyl-L-lysyl(9)-[histone H3] + 2 formaldehyde + 2 succinate + 2 CO2. Its function is as follows. Probable histone demethylase that specifically demethylates 'Lys-9' of histone H3, thereby playing a central role in histone code. This Homo sapiens (Human) protein is Probable lysine-specific demethylase 4F.